Consider the following 99-residue polypeptide: DNA-directed RNA polymerase subunit Rpo11 (99 aa).

It belongs to the archaeal Rpo11/eukaryotic RPB11/RPC19 RNA polymerase subunit family. In terms of assembly, part of the RNA polymerase complex. Forms an Rpo3-Rpo10-Rpo11-Rpo12 complex upon coexpression.

It is found in the cytoplasm. The enzyme catalyses RNA(n) + a ribonucleoside 5'-triphosphate = RNA(n+1) + diphosphate. In terms of biological role, DNA-dependent RNA polymerase (RNAP) catalyzes the transcription of DNA into RNA using the four ribonucleoside triphosphates as substrates. This chain is DNA-directed RNA polymerase subunit Rpo11, found in Methanocaldococcus jannaschii (strain ATCC 43067 / DSM 2661 / JAL-1 / JCM 10045 / NBRC 100440) (Methanococcus jannaschii).